The primary structure comprises 527 residues: Bromodomain-containing protein 9 (527 aa).

Residues 1-16 (MNVSVTKRRKKKKKKK) show a composition bias toward basic residues. The tract at residues 1–54 (MNVSVTKRRKKKKKKKSEKEKDKYLDEDERRRRKEEKKRKREKEQCDSEGETEV) is disordered. Basic and acidic residues predominate over residues 17 to 30 (SEKEKDKYLDEDER). Over residues 31 to 41 (RRRKEEKKRKR) the composition is skewed to basic residues. In terms of domain architecture, Bromo spans 78-182 (NESTPLQQLL…HTGFKMMSKA (105 aa)). The tract at residues 156-158 (TYN) is histone H4K5ac H4K8ac and histone H4K5bu H4K8bu binding. A compositionally biased stretch (basic and acidic residues) spans 468–478 (DFHDVHNDRGG). The disordered stretch occupies residues 468–527 (DFHDVHNDRGGSRPSSSSSMSNNSERDHHLGSPSRISVGEQQDIHDPYEFLQSPETDNQN). Residues 479 to 490 (SRPSSSSSMSNN) are compositionally biased toward low complexity.

In terms of assembly, binds acetylated histones H3 and H4. Binds butyrylated histone H4.

The protein resides in the nucleus. Functionally, plays a role in chromatin remodeling and regulation of transcription. Acts as a chromatin reader that recognizes and binds acylated histones: binds histones that are acetylated and/or butyrylated. This Xenopus laevis (African clawed frog) protein is Bromodomain-containing protein 9 (brd9).